Reading from the N-terminus, the 413-residue chain is Alpha-1-antitrypsin-like protein CM55-ST (413 aa).

Positions 1–24 (MPSSISWGLLLLAALSCLGPGSLA) are cleaved as a signal peptide. At Q25 the chain carries Pyrrolidone carboxylic acid. 4 N-linked (GlcNAc...) asparagine glycosylation sites follow: N65, N102, N165, and N266. Positions 368–387 (GGTVLGNIRSTLRYEVIFDR) are RCL.

It belongs to the serpin family. As to expression, expressed in liver.

The chain is Alpha-1-antitrypsin-like protein CM55-ST from Tamias sibiricus (Siberian chipmunk).